We begin with the raw amino-acid sequence, 883 residues long: UTP--glucose-1-phosphate uridylyltransferase 3, chloroplastic (883 aa).

The transit peptide at 1 to 72 (MANPQASPIL…HQVRHVSTVP (72 aa)) directs the protein to the chloroplast.

The protein belongs to the UDPGP type 1 family. Mg(2+) is required as a cofactor.

Its subcellular location is the plastid. The protein resides in the chloroplast. It carries out the reaction alpha-D-glucose 1-phosphate + UTP + H(+) = UDP-alpha-D-glucose + diphosphate. With respect to regulation, inhibited by pyrophosphate. In terms of biological role, involved in the biosynthesis of sulfolipids in the chloroplast. Catalyzes the first committed step in sulfolipid biosynthesis. Converts glucose 1-phosphate to UDP-glucose, the precursor of the polar head of sulfolipid. In addition to glucose 1-phosphate, can use galactose 1-phosphate, but with much lower activity. No uridyltransferase activity with other hexose monophosphates. Specific for UTP and cannot use ATP, CTP, and GTP. In Arabidopsis thaliana (Mouse-ear cress), this protein is UTP--glucose-1-phosphate uridylyltransferase 3, chloroplastic.